The primary structure comprises 1230 residues: MGISRRPKADKNASAADSAPGGKPNIQKAQFDTTKKKEVGVSDLTLISKVSNEAINENLKKRFDNREIYTYIGHVLVSVNPFRDLGIYTDAVLESYKGKNRLEMPPHVFAVAESAYYNMNAYKDNQCVIISGESGAGKTEAAKRIMQYIANVSGGSNSSIQETKEMVLATNPLLESFGNAKTLRNNNSSRFGKYLQLQFNAQGEPVGADITNYLLEKTRVVTQIKDERNFHIFYQFTKGASQAYRESYGIQQPSQYLYTSKAGCFDVDGIDDLAEYQDTLQAMKVIGLSQAEQDEIFRMLAAILWTGNIQFREGDDGYATVVDQSVVDFLAYLLDVDAAHVIQAITIRILTPRNGEVIESPANVPQAMATRDALAKAIYNNLFDWIVERVNKSLTARAETSNSIGILDIYGFEIFEQNSFEQLCINYVNEKLQQIFIQLTLKTEQEEYAREQIKWTPIKYFDNKIVCDLIEAIRPPGVFSAMKDATKTAHADPAACDRTFMQAISGMSNPHLTPRQGNFIIKHYAGDVSYTVEGITDKNKDQLLKGLLNLFGQSRNHFIHELFPHQVDQDNRKQPPSAGDKIKASANDLVTTLMKATPSYIRTIKPNENKSPTEYNEKNVLHQVKYLGLQENVRIRRAGFAYRQTFDKFVERFYLLSPKTSYAGDYIWTGDSKTGAMQILKDTNIPVEEYQMGVTKAFIKAPETLFALEHMRDRYWHNMAARIQRVWRAFLQIRIEAATRIQRMFRKKREGKEFLELREKGHQILQGRKERRRYSLLGSRRFMGDYLGIAATTGPGSKIRGSINLPASEVTLFSCRGEILETKFGRSSKLSPRIFIMTRTKFYIVSQLLVNKQVQIAVEKAIPLGAIKFVSISTCRDDWFSLGVGSPQEADPLLTCVFKTELFTHMQAAMPGGGFNLKIGDSIEYAKKPNKMQLIKVVKDSQQAQDHYKSATIHTQAGEPPNSRSKPLPKGKPVAAKPFTSGRLIKPGGPGGRPSRLTNGNRPTPKPVPTPAPAAARPVPAVNPVAASIPVHTRNTSVQSTQSTRAVPPPPPPAPPAPPPAPVSKEPQYRVLYEFAGQSANEFSLKQGEIVTVLQKETNGWWLTKNVRGQGWAPTAYLEEVTPPPPPPVATRPAPPPAPGPPKMNGTNGAAIRSKPTPPAPPAKRPAAGRKPAPPPAPRDSGMSISSNGSGNNSGRSTPTPSLAGGLAEALRARQSAMQGNAKREDEDDW.

The interval 1–32 (MGISRRPKADKNASAADSAPGGKPNIQKAQFD) is disordered. The region spanning 39 to 713 (VGVSDLTLIS…TLFALEHMRD (675 aa)) is the Myosin motor domain. 132 to 139 (GESGAGKT) contributes to the ATP binding site. Positions 403–485 (SIGILDIYGF…PGVFSAMKDA (83 aa)) are actin-binding. IQ domains follow at residues 717 to 737 (HNMA…RIEA) and 738 to 763 (ATRI…KGHQ). The 191-residue stretch at 771 to 961 (RRRYSLLGSR…TIHTQAGEPP (191 aa)) folds into the TH1 domain. 3 disordered regions span residues 945 to 1018 (QDHY…AARP), 1033 to 1065 (TRNT…PVSK), and 1116 to 1230 (AYLE…EDDW). The span at 1033-1045 (TRNTSVQSTQSTR) shows a compositional bias: polar residues. 2 stretches are compositionally biased toward pro residues: residues 1047-1062 (VPPP…PPAP) and 1122-1142 (TPPP…PGPP). The region spanning 1064–1123 (SKEPQYRVLYEFAGQSANEFSLKQGEIVTVLQKETNGWWLTKNVRGQGWAPTAYLEEVTP) is the SH3 domain. A compositionally biased stretch (low complexity) spans 1179-1214 (RDSGMSISSNGSGNNSGRSTPTPSLAGGLAEALRAR).

This sequence belongs to the TRAFAC class myosin-kinesin ATPase superfamily. Myosin family.

The protein resides in the cytoplasm. The protein localises to the cytoskeleton. Its subcellular location is the actin patch. In terms of biological role, type-I myosin implicated in the organization of the actin cytoskeleton. Required for proper actin cytoskeleton polarization. At the cell cortex, assembles in patch-like structures together with proteins from the actin-polymerizing machinery and promotes actin assembly. Functions as actin nucleation-promoting factor (NPF) for the Arp2/3 complex. The polypeptide is Myosin-1 (myoA) (Sclerotinia sclerotiorum (strain ATCC 18683 / 1980 / Ss-1) (White mold)).